The chain runs to 242 residues: UPF0246 protein SPP_1571 (242 aa).

This sequence belongs to the UPF0246 family.

The sequence is that of UPF0246 protein SPP_1571 from Streptococcus pneumoniae (strain P1031).